A 545-amino-acid chain; its full sequence is Thermosome subunit (545 aa).

It belongs to the TCP-1 chaperonin family. In terms of assembly, forms an oligomeric complex of eight-membered rings.

Functionally, molecular chaperone; binds unfolded polypeptides in vitro, and has a weak ATPase activity. The chain is Thermosome subunit (ths) from Methanopyrus kandleri (strain AV19 / DSM 6324 / JCM 9639 / NBRC 100938).